The following is a 208-amino-acid chain: MNDALALLLSMLVSAIAFAVLFPPTAPWLKKRLFADLRHQAVAACHARLAGLRTRFESGARDLMYQAHTLSADHPTCSATPCWMFAVLETGNAAIDLRHELATLPSDPRYAPTTPWRRAIETMRAALSSLFARPDAERFDATLAAVNDAIDATRQTLDAFTPTREERHRLQRILSHLHFVRTALLDPESPLAALNRNRPVRPQPGASS.

A helical membrane pass occupies residues 7–29 (LLLSMLVSAIAFAVLFPPTAPWL).

Its subcellular location is the cell membrane. Functionally, involved in the resistance (detoxification) of the fungal toxin fusaric acid. This chain is Fusaric acid resistance protein FusD (fusD), found in Burkholderia cepacia (Pseudomonas cepacia).